We begin with the raw amino-acid sequence, 1256 residues long: SNF2 domain-containing protein CLASSY 1 (1256 aa).

Disordered regions lie at residues 269–290 and 448–467; these read ELRR…EIQP and GNVV…VSRE. Residues 278 to 290 are compositionally biased toward basic and acidic residues; sequence GRPERYGDSEIQP. A compositionally biased stretch (basic residues) spans 451–463; it reads VHKRNGPHSRIRS. The Helicase ATP-binding domain maps to 699 to 898; sequence DPSSDKIGGC…FNTLCLARPK (200 aa). 712 to 719 is a binding site for ATP; it reads HTPGAGKT. The short motif at 849–852 is the DEAH box element; that stretch reads DEGH. The Helicase C-terminal domain occupies 1061–1222; sequence FVLNLVFRVV…EFVEDPSQWQ (162 aa).

The protein belongs to the helicase family. In terms of assembly, interacts with NRPD1, NRPD3 and SHH1.

The protein resides in the nucleus. It is found in the nucleoplasm. It localises to the nucleolus. In terms of biological role, probable chromatin remodeling factor. Required for the initial establishment of DNA methylation and for accumulation of 24-nt siRNAs. May act on RNA templates by remodeling ribonucleoprotein structures and thereby influencing the availability of the RNA to polymerases. The polypeptide is SNF2 domain-containing protein CLASSY 1 (CLSY1) (Arabidopsis thaliana (Mouse-ear cress)).